A 680-amino-acid chain; its full sequence is Zinc finger protein 334 (680 aa).

The 72-residue stretch at 10-81 (VSFQDLTVNF…EEFSNQNYPD (72 aa)) folds into the KRAB domain. 14 consecutive C2H2-type zinc fingers follow at residues 237-259 (NECN…QRIH), 265-287 (YVCS…RRIH), 293-315 (YECS…QKIH), 321-343 (YECN…FRSH), 349-371 (YECK…QRTH), 377-399 (NECK…QRIH), 405-427 (YECS…RRSH), 433-455 (YECS…QITH), 461-483 (YECN…QRTH), 544-566 (YECN…QRTH), 572-594 (YECN…QRTH), 600-622 (YECN…RRIH), 628-650 (YECN…QKIH), and 656-678 (YECN…QKSH).

Belongs to the krueppel C2H2-type zinc-finger protein family.

The protein resides in the nucleus. In terms of biological role, may be involved in transcriptional regulation. In Homo sapiens (Human), this protein is Zinc finger protein 334 (ZNF334).